We begin with the raw amino-acid sequence, 149 residues long: Flagellar assembly factor FliW (149 aa).

The protein belongs to the FliW family. In terms of assembly, interacts with translational regulator CsrA and flagellin(s).

The protein resides in the cytoplasm. Functionally, acts as an anti-CsrA protein, binds CsrA and prevents it from repressing translation of its target genes, one of which is flagellin. Binds to flagellin and participates in the assembly of the flagellum. This chain is Flagellar assembly factor FliW, found in Thermotoga sp. (strain RQ2).